Reading from the N-terminus, the 474-residue chain is MATEYDVVILGGGTGGYVAAIRAAQLGLKTAVVEKEKLGGTCLHKGCIPSKALLRSAEVYRTAREADQFGVETAGVSLNFEKVQQRKQAVVDKLAAGVNHLMKKGKIDVYTGYGRILGPSIFSPLPGTISVERGNGEENDMLIPKQVIIATGSRPRMLPGLEVDGKSVLTSDEALQMEELPQSIIIVGGGVIGIEWASMLHDFGVKVTVIEYADRILPTEDLEISKEMESLLKKKGIQFITGAKVLPDTMTKTSDDISIQAEKDGETVTYSAEKMLVSIGRQANIEGIGLENTDIVTENGMISVNESCQTKESHIYAIGDVIGGLQLAHVASHEGIIAVEHFAGLNPHPLDPTLVPKCIYSSPEAASVGLTEDEAKANGHNVKIGKFPFMAIGKALVYGESDGFVKIVADRDTDDILGVHMIGPHVTDMISEAGLAKVLDATPWEVGQTIHPHPTLSEAIGEAALAADGKAIHF.

Residues 34–42 (EKEKLGGTC), lysine 51, and glycine 114 contribute to the FAD site. The cysteines at positions 42 and 47 are disulfide-linked. NAD(+)-binding positions include 188–192 (GGGVI), glutamate 211, valine 245, and 278–281 (SIGR). FAD is bound by residues aspartate 320 and alanine 328. Histidine 453 (proton acceptor) is an active-site residue.

The protein belongs to the class-I pyridine nucleotide-disulfide oxidoreductase family. In terms of assembly, homodimer. FAD is required as a cofactor.

Its subcellular location is the cytoplasm. The enzyme catalyses N(6)-[(R)-dihydrolipoyl]-L-lysyl-[protein] + NAD(+) = N(6)-[(R)-lipoyl]-L-lysyl-[protein] + NADH + H(+). Functionally, the branched-chain alpha-keto dehydrogenase complex catalyzes the overall conversion of alpha-keto acids to acyl-CoA and CO(2). It contains multiple copies of 3 enzymatic components: branched-chain alpha-keto acid decarboxylase (E1), lipoamide acyltransferase (E2) and lipoamide dehydrogenase (E3). The sequence is that of Dihydrolipoyl dehydrogenase (bfmBC) from Bacillus subtilis (strain 168).